Consider the following 603-residue polypeptide: Ribosome-inactivating protein PMRIPt (603 aa).

The signal sequence occupies residues 1–39 (MRVVAGILYIVVMAICGLGIQGGTLQDYPSVYFQDSTLQ). 2 N-linked (GlcNAc...) asparagine glycosylation sites follow: Asn-74 and Asn-168. Glu-208 is a catalytic residue. Cystine bridges form between Cys-297–Cys-335, Cys-351–Cys-370, and Cys-392–Cys-409. Ricin B-type lectin domains are found at residues 338 to 466 (GEPT…VGDD) and 467 to 593 (VEPI…WMTM). Residues 348–388 (DGLCMDVRNESNNDGIPIQLWPCGAQRNQQWTFHTDGTIQS) form a 1-alpha repeat. 2 N-linked (GlcNAc...) asparagine glycosylation sites follow: Asn-356 and Asn-408. One copy of the 1-beta repeat lies at 389-430 (MGKCMTSNGYHPGDYVMIFNCSTAPVPDATKWVVSIDGSITN). The 1-gamma repeat unit spans residues 433–466 (SGLVLTAPQAAQTTILLVVRNTHSAKQGRSVGDD). The stretch at 478-516 (KYMCLQGNNENNTRVWLEDCAVDRPQQWWALYSDGTIRV) is one 2-alpha repeat. Disulfide bonds link Cys-481–Cys-497 and Cys-523–Cys-540. Asn-488 is a glycosylation site (N-linked (GlcNAc...) asparagine). The stretch at 520–558 (RSLCVTSDGHSSRDAIIILTCDGGINQRLVFNTDGTILN) is one 2-beta repeat. The 2-gamma repeat unit spans residues 561 to 597 (AQLVMDVRQSNVALRQIILYQPTGNPNQQWMTMITRT).

This sequence belongs to the ribosome-inactivating protein family. Type 2 RIP subfamily. Tetramer of four pairs of disulfide bound A-B chains. The precursor is processed in two chains, A and B, that are linked by a disulfide bond. In terms of processing, glycosylated. As to expression, expressed in rhizome and more abundantly in leaves (at protein level).

It catalyses the reaction Endohydrolysis of the N-glycosidic bond at one specific adenosine on the 28S rRNA.. Strongly inhibited by asialofetuin and asialomucin. In terms of biological role, galNAc-specific agglutinin. Behaves as a type-2 ribosome-inactivating protein. Inhibits mammalian ribosomes. The A chain is responsible for inhibiting protein synthesis through the catalytic inactivation of 60S ribosomal subunits by removing adenine from position 4,324 of 28S rRNA. The B chain binds to cell receptors and probably facilitates the entry into the cell of the A chain; B chains are also responsible for cell agglutination (lectin activity). Involved in plant defense against insects. Has very low cytotoxic activity against the human tumor cell lines CEM and Molt4. In Polygonatum multiflorum (Solomon's seal), this protein is Ribosome-inactivating protein PMRIPt.